The following is a 608-amino-acid chain: tRNA (guanine(37)-N(1))-methyltransferase 1 (608 aa).

A disordered region spans residues 207–229; sequence SRPKKKKRRKEEERSEGKKRTGK. Positions 216-229 are enriched in basic and acidic residues; the sequence is KEEERSEGKKRTGK. S-adenosyl-L-methionine is bound by residues R425, 463-464, 491-492, and N514; these read DL and DG.

It belongs to the class I-like SAM-binding methyltransferase superfamily. TRM5/TYW2 family. As to quaternary structure, monomer.

It localises to the mitochondrion matrix. Its subcellular location is the nucleus. It is found in the cytoplasm. It carries out the reaction guanosine(37) in tRNA + S-adenosyl-L-methionine = N(1)-methylguanosine(37) in tRNA + S-adenosyl-L-homocysteine + H(+). Functionally, specifically methylates the N1 position of guanosine-37 in various cytoplasmic and mitochondrial tRNAs. Methylation is not dependent on the nature of the nucleoside 5' of the target nucleoside. This is the first step in the biosynthesis of wybutosine (yW), a modified base adjacent to the anticodon of tRNAs and required for accurate decoding. This Vitis vinifera (Grape) protein is tRNA (guanine(37)-N(1))-methyltransferase 1.